Here is a 224-residue protein sequence, read N- to C-terminus: Myogenin (224 aa).

Residues Ser-77 and Ser-79 each carry the phosphoserine; by CaMK2G modification. Positions 81–132 (DRRRAATLREKRRLKKVNEAFEALKRSTLLNPNQRLPKVEILRSAIQYIERL) constitute a bHLH domain. The residue at position 87 (Thr-87) is a Phosphothreonine; by CaMK2G.

In terms of assembly, homodimer and heterodimer with E12; heterodimerization enhances MYOG DNA-binding and transcriptional activities. Interacts with SMARCA4/BRG1/BAF190A. Interacts (via C-terminal region) with SSRP1 and SUPT16H; the interaction is indicative of an interaction with the FACT complex. Interacts with CSRP3. Post-translationally, phosphorylated by CAMK2G on threonine and serine amino acids in a muscle activity-dependent manner. Phosphorylation of Thr-87 impairs both DNA-binding and trans-activation functions in contracting muscles.

The protein resides in the nucleus. Functionally, acts as a transcriptional activator that promotes transcription of muscle-specific target genes and plays a role in muscle differentiation, cell cycle exit and muscle atrophy. Essential for the development of functional embryonic skeletal fiber muscle differentiation. However is dispensable for postnatal skeletal muscle growth; phosphorylation by CAMK2G inhibits its transcriptional activity in respons to muscle activity. Required for the recruitment of the FACT complex to muscle-specific promoter regions, thus promoting gene expression initiation. During terminal myoblast differentiation, plays a role as a strong activator of transcription at loci with an open chromatin structure previously initiated by MYOD1. Together with MYF5 and MYOD1, co-occupies muscle-specific gene promoter core regions during myogenesis. Also cooperates with myocyte-specific enhancer factor MEF2D and BRG1-dependent recruitment of SWI/SNF chromatin-remodeling enzymes to alter chromatin structure at myogenic late gene promoters. Facilitates cell cycle exit during terminal muscle differentiation through the up-regulation of miR-20a expression, which in turn represses genes involved in cell cycle progression. Binds to the E-box containing (E1) promoter region of the miR-20a gene. Also plays a role in preventing reversal of muscle cell differentiation. Contributes to the atrophy-related gene expression in adult denervated muscles. Induces fibroblasts to differentiate into myoblasts. In Bos taurus (Bovine), this protein is Myogenin (MYOG).